The following is a 487-amino-acid chain: 3-octaprenyl-4-hydroxybenzoate carboxy-lyase (487 aa).

Asparagine 172 lines the Mn(2+) pocket. Residues 175–177 (IYR), 189–191 (RWL), and 194–195 (RG) each bind prenylated FMN. Glutamate 238 contacts Mn(2+). Aspartate 287 acts as the Proton donor in catalysis.

This sequence belongs to the UbiD family. Homohexamer. It depends on prenylated FMN as a cofactor. The cofactor is Mn(2+).

It localises to the cell membrane. It catalyses the reaction a 4-hydroxy-3-(all-trans-polyprenyl)benzoate + H(+) = a 2-(all-trans-polyprenyl)phenol + CO2. Its pathway is cofactor biosynthesis; ubiquinone biosynthesis. In terms of biological role, catalyzes the decarboxylation of 3-octaprenyl-4-hydroxy benzoate to 2-octaprenylphenol, an intermediate step in ubiquinone biosynthesis. The polypeptide is 3-octaprenyl-4-hydroxybenzoate carboxy-lyase (Thiobacillus denitrificans (strain ATCC 25259 / T1)).